Here is an 809-residue protein sequence, read N- to C-terminus: Probable disease resistance protein At5g66900 (809 aa).

An RPW8 domain is found at 1–150; that stretch reads MNDWASLGIG…LSKRMDLLSV (150 aa). The stretch at 50-86 forms a coiled coil; the sequence is PLTQKIDSMQKELDFGVKELKELRDTIERADVAVRKF. NB-ARC domains are found at residues 153–280 and 339–438; these read PVFR…DDVW and SPDE…DMWV. 194–201 contacts ATP; the sequence is APPGCGKT. Positions 494–515 form a coiled coil; the sequence is QSEFKENLERKRLNLEILENTF. 4 LRR repeats span residues 650–672, 674–696, 698–720, and 722–744; these read KLQE…ISEI, SLKT…IGNL, RLEV…TEGL, and NLRF…IGKL.

It belongs to the disease resistance NB-LRR family.

In terms of biological role, probable disease resistance protein. The protein is Probable disease resistance protein At5g66900 of Arabidopsis thaliana (Mouse-ear cress).